Consider the following 199-residue polypeptide: Copper transport protein CTR4 (199 aa).

The next 2 helical transmembrane spans lie at 62-82 and 152-172; these read KGMFAGSIIGIFFLCVLIELI and AFFVMLLGMYFNVIVLIFIFL.

Belongs to the copper transporter (Ctr) (TC 1.A.56) family. SLC31A subfamily.

The protein localises to the membrane. In terms of biological role, required for high affinity copper (probably reduced Cu I) transport into the cell. Plays a role in fungal pathogenesis during host infection. In Cryptococcus neoformans var. grubii serotype A (strain H99 / ATCC 208821 / CBS 10515 / FGSC 9487) (Filobasidiella neoformans var. grubii), this protein is Copper transport protein CTR4.